Consider the following 320-residue polypeptide: MKIFDYDDVQLIPEMCIVNSRKECETTATLGKHTFKLPVVPANMATIINEELAEKLARNDYFYIMHRFNVDQLKFIKNMKDKNLITSISLGVKPDEYKLVDQMVQQNLIPDYITIDIAHGHALSVKNMISYIREKMKDQVFIIAGNVTTPKAVRDLELWGADATKIEIGPGKVCITKLKTGFGTGGWQLSALKYCAKTASKPIIADGGLRVHGDIAKSIRMGASFCMIVSLFAAHLESPGKEVEINNCIYKEYYGSASEYNKSEKRYVEGKKELIKIRGSIFDTLKEMTEDLQSSISYAGGKDLQAIKRVDYVLLGDYKD.

Cys-174 functions as the Thioimidate intermediate in the catalytic mechanism. 203 to 226 lines the NADP(+) pocket; sequence IIADGGLRVHGDIAKSIRMGASFC.

The protein belongs to the IMPDH/GMPR family. GuaC type 2 subfamily.

The catalysed reaction is IMP + NH4(+) + NADP(+) = GMP + NADPH + 2 H(+). Catalyzes the irreversible NADPH-dependent deamination of GMP to IMP. It functions in the conversion of nucleobase, nucleoside and nucleotide derivatives of G to A nucleotides, and in maintaining the intracellular balance of A and G nucleotides. The sequence is that of GMP reductase from Mycoplasma mycoides subsp. mycoides SC (strain CCUG 32753 / NCTC 10114 / PG1).